We begin with the raw amino-acid sequence, 527 residues long: Cytochrome P450 monooygenase 3 (527 aa).

A helical membrane pass occupies residues 21–41 (IAVAFAALCGATGLLAFSWWI). Heme is bound at residue Cys-473.

The protein belongs to the cytochrome P450 family. Requires heme as cofactor.

Its subcellular location is the membrane. The protein operates within plant hormone biosynthesis; gibberellin biosynthesis. Gibberellin 13-hydroxylase; part of the gene cluster that mediates the biosynthesis of gibberellins (GAs), diterpenoids that may provide a selective advantage during infection of the preferred host plant, rice. Gibberellins (GAs) are diterpenoids and are synthesized via the mevalonate pathway. Biosynthesis of the major metabolite GA3 (gibberellic acid) from geranylgeranyl diphosphate (GGPP) requires 13 steps. The GGPP produced by the geranylgeranyl diphosphate synthase GGS2 is converted to ent-kaurene via ent-copalyldiphosphate in a two-step cyclization reaction performed by the bifunctional ent-copalyl diphosphate synthase/ent-kaurene synthase enzyme (CPS/KS). Ent-Kaurene is metabolized to GAs by a series of oxidation reactions catalyzed by cytochrome P450 monooxygenases. Cytochrome P450 monooxygenase P450-4 is an ent-kaurene oxidase that catalyzes the three oxidation steps between ent-kaurene and ent-kaurenoic acid. The highly multifunctional cytochrome P450 monooxygenase P450-1 then catalyzes four steps involving oxidation at two carbon atoms, in the main pathway from ent-kaurenoic acid to GA14 via GA12-aldehyde as well as producing kaurenolides and fujenoic acids as by-products. The cytochrome P450 monooxygenase P450-2 then converts GA14 to GA4 by removal of C-20. GA4 is further converted to GA7 by the GA4 desaturase DES via 1,2-desaturation before cytochrome P450 monooxygenase P450-3, a 13-hydroxylase, hydroxylates GA7 to GA3, the final product of the GA-biosynthetic pathway. The polypeptide is Cytochrome P450 monooygenase 3 (Gibberella fujikuroi (strain CBS 195.34 / IMI 58289 / NRRL A-6831) (Bakanae and foot rot disease fungus)).